Consider the following 208-residue polypeptide: Protein-L-isoaspartate O-methyltransferase (208 aa).

Ser-59 is a catalytic residue.

It belongs to the methyltransferase superfamily. L-isoaspartyl/D-aspartyl protein methyltransferase family.

It is found in the cytoplasm. It catalyses the reaction [protein]-L-isoaspartate + S-adenosyl-L-methionine = [protein]-L-isoaspartate alpha-methyl ester + S-adenosyl-L-homocysteine. Functionally, catalyzes the methyl esterification of L-isoaspartyl residues in peptides and proteins that result from spontaneous decomposition of normal L-aspartyl and L-asparaginyl residues. It plays a role in the repair and/or degradation of damaged proteins. The chain is Protein-L-isoaspartate O-methyltransferase from Klebsiella pneumoniae (strain 342).